The primary structure comprises 111 residues: PCNA-associated factor (111 aa).

Positions 1–10 are enriched in polar residues; the sequence is MVRTKANSVP. The interval 1 to 111 is disordered; that stretch reads MVRTKANSVP…PPDHTDDEKE (111 aa). Phosphoserine is present on Ser-8. Lys-15 participates in a covalent cross-link: Glycyl lysine isopeptide (Lys-Gly) (interchain with G-Cter in ubiquitin). The short motif at 23-34 is the D-box element; the sequence is RKVLGSSTSAAN. Lys-24 bears the N6-acetyllysine; alternate mark. A Glycyl lysine isopeptide (Lys-Gly) (interchain with G-Cter in ubiquitin); alternate cross-link involves residue Lys-24. A compositionally biased stretch (polar residues) spans 27–39; the sequence is GSSTSAANSTPLS. 3 positions are modified to phosphoserine: Ser-28, Ser-31, and Ser-72. The short motif at 62–72 is the PIP-box element; sequence QKGIGEFFSLS. Residues 74–84 are compositionally biased toward basic and acidic residues; the sequence is KDSEKENRIPE. The KEN box signature appears at 78 to 80; sequence KEN. The short motif at 85 to 97 is the Initiation motif element; the sequence is EAGSSGLGKAKRK.

In terms of assembly, interacts (when monoubiquitinated at Lys-15 and Lys-24) with PCNA. Interacts with isoform 2/p33ING1b of ING1. Interacts with BRCA1. Monoubiquitinated at Lys-15 and Lys-24 during normal S phase, promoting its association with PCNA. Also diubiquitinated at these 2 sites. Following DNA damage, monoubiquitin chains at Lys-15 and Lys-24 are probably extended, leading to disrupt the interaction with PCNA. Polyubiquitinated by the APC/C complex at the mitotic exit, leading to its degradation by the proteasome.

It localises to the nucleus. Its subcellular location is the cytoplasm. The protein localises to the perinuclear region. In terms of biological role, PCNA-binding protein that acts as a regulator of DNA repair during DNA replication. Following DNA damage, the interaction with PCNA is disrupted, facilitating the interaction between monoubiquitinated PCNA and the translesion DNA synthesis DNA polymerase eta (POLH) at stalled replisomes, facilitating the bypass of replication-fork-blocking lesions. Also acts as a regulator of centrosome number. This Bos taurus (Bovine) protein is PCNA-associated factor.